The sequence spans 293 residues: Cytidine deaminase 6 (293 aa).

2 consecutive CMP/dCMP-type deaminase domains span residues 16-147 and 178-293; these read RGPS…FGPD and EDCS…TNKN. Position 57 to 59 (57 to 59) interacts with substrate; it reads NVE. His-70 is a binding site for Zn(2+). Glu-72 acts as the Proton donor in catalysis. 2 residues coordinate Zn(2+): Cys-103 and Cys-106.

It belongs to the cytidine and deoxycytidylate deaminase family. In terms of assembly, homodimer. It depends on Zn(2+) as a cofactor.

The enzyme catalyses cytidine + H2O + H(+) = uridine + NH4(+). It catalyses the reaction 2'-deoxycytidine + H2O + H(+) = 2'-deoxyuridine + NH4(+). Functionally, this enzyme scavenges exogenous and endogenous cytidine and 2'-deoxycytidine for UMP synthesis. This Arabidopsis thaliana (Mouse-ear cress) protein is Cytidine deaminase 6 (CDA6).